The following is a 283-amino-acid chain: Foldase protein PrsA 3 (283 aa).

Residues 1–21 (MKKKKIFIGTIISCVMLALSA) form the signal peptide. Residue Cys-22 is the site of N-palmitoyl cysteine attachment. Cys-22 carries S-diacylglycerol cysteine lipidation. The 91-residue stretch at 132-222 (KPEMKVSHIL…YGYHIIKVTD (91 aa)) folds into the PpiC domain.

It belongs to the PrsA family.

The protein resides in the cell membrane. The enzyme catalyses [protein]-peptidylproline (omega=180) = [protein]-peptidylproline (omega=0). In terms of biological role, plays a major role in protein secretion by helping the post-translocational extracellular folding of several secreted proteins. This is Foldase protein PrsA 3 (prsA3) from Bacillus cereus (strain ATCC 14579 / DSM 31 / CCUG 7414 / JCM 2152 / NBRC 15305 / NCIMB 9373 / NCTC 2599 / NRRL B-3711).